Reading from the N-terminus, the 189-residue chain is Small ribosomal subunit protein uS5 (189 aa).

Positions 22–85 (FVDKLVAINR…ESAKRDLIFV (64 aa)) constitute an S5 DRBM domain.

The protein belongs to the universal ribosomal protein uS5 family. In terms of assembly, part of the 30S ribosomal subunit. Contacts proteins S4 and S8.

With S4 and S12 plays an important role in translational accuracy. Its function is as follows. Located at the back of the 30S subunit body where it stabilizes the conformation of the head with respect to the body. This Allorhizobium ampelinum (strain ATCC BAA-846 / DSM 112012 / S4) (Agrobacterium vitis (strain S4)) protein is Small ribosomal subunit protein uS5.